Consider the following 165-residue polypeptide: Nucleotide-binding protein CFF8240_1664 (165 aa).

The protein belongs to the YajQ family.

In terms of biological role, nucleotide-binding protein. This Campylobacter fetus subsp. fetus (strain 82-40) protein is Nucleotide-binding protein CFF8240_1664.